The sequence spans 196 residues: Glycerol-3-phosphate acyltransferase (196 aa).

The next 5 helical transmembrane spans lie at M1–F21, K53–D73, Y76–I96, V115–F135, and V141–F161.

It belongs to the PlsY family. Probably interacts with PlsX.

It is found in the cell inner membrane. It catalyses the reaction an acyl phosphate + sn-glycerol 3-phosphate = a 1-acyl-sn-glycero-3-phosphate + phosphate. Its pathway is lipid metabolism; phospholipid metabolism. In terms of biological role, catalyzes the transfer of an acyl group from acyl-phosphate (acyl-PO(4)) to glycerol-3-phosphate (G3P) to form lysophosphatidic acid (LPA). This enzyme utilizes acyl-phosphate as fatty acyl donor, but not acyl-CoA or acyl-ACP. The protein is Glycerol-3-phosphate acyltransferase of Hydrogenobaculum sp. (strain Y04AAS1).